The primary structure comprises 537 residues: Zinc finger protein 835 (537 aa).

Positions 12-109 (AELEGNWKHE…RERGGGPKKP (98 aa)) are disordered. Residues 63-77 (TISSPAATQASVPDD) show a composition bias toward polar residues. Over residues 89–104 (SPKERHPDSRQRERGG) the composition is skewed to basic and acidic residues. 14 consecutive C2H2-type zinc fingers follow at residues 110–132 (WKCGDCGKAFSYCSAFILHQRIH), 138–160 (FACPECGKAFSQSVHLTLHQRTH), 166–188 (YACHECGKAFSQGSYLASHWRTH), 194–216 (HRCADCGKAFTRVTHLTQHRRVH), 222–244 (YACAQCAKAFRNRSSLIEHQRIH), 250–272 (YECSACAKAFRFSSALIRHQRIH), 278–300 (YRCGQCAKAFAQIAHLTQHRRVH), 306–328 (YTCQDCGALFSQSASLAEHRRIH), 334–356 (YACGQCAKAFTQVSHLTQHQRTH), 362–384 (YPCHDCGKRFSNRSHLLQHRLVH), 390–412 (YRCLQCGAAFSHVSSLIEHQKIH), 418–440 (YKCGECGKAFSQGSSLALHQRTH), 446–468 (YTCPECGKAFSNRSYLIQHHIVH), and 474–496 (YECSGCGKAFSFSSALIRHQRTH). The interval 497–537 (ADSSGRLCPAPTPDSTPGLSQGGETCQQGCPGRNPRGPAED) is disordered. The span at 509–524 (PDSTPGLSQGGETCQQ) shows a compositional bias: polar residues.

The protein belongs to the krueppel C2H2-type zinc-finger protein family.

It localises to the nucleus. In terms of biological role, may be involved in transcriptional regulation. This is Zinc finger protein 835 (ZNF835) from Homo sapiens (Human).